A 258-amino-acid polypeptide reads, in one-letter code: Histidine/lysine/arginine/ornithine transport ATP-binding protein HisP (258 aa).

The ABC transporter domain maps to 7–253 (LHVIDLHKRY…PQSPRLQQFL (247 aa)). Residues Ser-41, Gly-42, Gly-44, Lys-45, Ser-46, and Thr-47 each coordinate ATP.

The protein belongs to the ABC transporter superfamily. In terms of assembly, the HisPMQJ complex is composed of two ATP-binding proteins (HisP), two transmembrane proteins (HisM and HisQ) and a solute-binding protein (HisJ). The HisPMQ-ArgT complex is composed of two ATP-binding proteins (HisP), two transmembrane proteins (HisM and HisQ) and a solute-binding protein (ArgT).

The protein localises to the cell inner membrane. The catalysed reaction is a polar amino acid(out) + ATP + H2O = a polar amino acid(in) + ADP + phosphate + H(+). It carries out the reaction L-histidine(out) + ATP + H2O = L-histidine(in) + ADP + phosphate + H(+). It catalyses the reaction L-lysine(out) + ATP + H2O = L-lysine(in) + ADP + phosphate + H(+). The enzyme catalyses L-arginine(out) + ATP + H2O = L-arginine(in) + ADP + phosphate + H(+). The catalysed reaction is L-ornithine(out) + ATP + H2O = L-ornithine(in) + ADP + phosphate + H(+). With respect to regulation, isolated, soluble HisP has a very low ATPase activity. ATPase activity is slightly increased in the presence of HisM and HisQ, and strongly increased when HisJ is also present. Functionally, part of the ABC transporter complex HisPMQJ involved in histidine transport. Is also part of the ABC transporter complex HisPMQ-ArgT involved in lysine/arginine/ornithine transport. Shows ATPase activity. Responsible for energy coupling to the transport system. This Salmonella typhimurium (strain LT2 / SGSC1412 / ATCC 700720) protein is Histidine/lysine/arginine/ornithine transport ATP-binding protein HisP.